The primary structure comprises 332 residues: tRNA dimethylallyltransferase (332 aa).

17-24 contacts ATP; that stretch reads GPTCSGKS. 19–24 serves as a coordination point for substrate; the sequence is TCSGKS. Interaction with substrate tRNA stretches follow at residues 42-45 and 166-170; these read DSMQ and QRVAR.

The protein belongs to the IPP transferase family. In terms of assembly, monomer. Requires Mg(2+) as cofactor.

It carries out the reaction adenosine(37) in tRNA + dimethylallyl diphosphate = N(6)-dimethylallyladenosine(37) in tRNA + diphosphate. Functionally, catalyzes the transfer of a dimethylallyl group onto the adenine at position 37 in tRNAs that read codons beginning with uridine, leading to the formation of N6-(dimethylallyl)adenosine (i(6)A). The chain is tRNA dimethylallyltransferase from Gluconacetobacter diazotrophicus (strain ATCC 49037 / DSM 5601 / CCUG 37298 / CIP 103539 / LMG 7603 / PAl5).